A 255-amino-acid polypeptide reads, in one-letter code: Increased copper sensitivity protein 2 (255 aa).

Over residues 1 to 12 (MGKFEQKERERI) the composition is skewed to basic and acidic residues. Disordered regions lie at residues 1–32 (MGKFEQKERERISTFSFPTTGSQSSTSIKSLG) and 82–142 (PGDK…RKSH). A compositionally biased stretch (polar residues) spans 13 to 30 (STFSFPTTGSQSSTSIKS). The span at 131–142 (SGRRKSYHRKSH) shows a compositional bias: basic residues. Residue S217 is modified to Phosphoserine.

This chain is Increased copper sensitivity protein 2 (ICS2), found in Saccharomyces cerevisiae (strain ATCC 204508 / S288c) (Baker's yeast).